Here is a 181-residue protein sequence, read N- to C-terminus: ADP-ribosylation factor 1 (181 aa).

Residue glycine 2 is the site of N-myristoyl glycine attachment. GTP contacts are provided by residues 24 to 31 (GLDAAGKT), 67 to 71 (DVGGQ), and 126 to 129 (NKQD).

This sequence belongs to the small GTPase superfamily. Arf family.

It localises to the golgi apparatus. It carries out the reaction GTP + H2O = GDP + phosphate + H(+). In terms of biological role, GTP-binding protein involved in protein trafficking; may modulate vesicle budding and uncoating within the Golgi apparatus. This chain is ADP-ribosylation factor 1 (ARF1), found in Daucus carota (Wild carrot).